A 291-amino-acid polypeptide reads, in one-letter code: Probable S-adenosylmethionine-dependent methyltransferase CRG1 (291 aa).

The protein belongs to the methyltransferase superfamily.

It localises to the cytoplasm. Its function is as follows. Probable S-adenosylmethionine-dependent methyltransferase which mediates cantharidin resistance. This chain is Probable S-adenosylmethionine-dependent methyltransferase CRG1 (CRG1), found in Saccharomyces cerevisiae (strain ATCC 204508 / S288c) (Baker's yeast).